Consider the following 77-residue polypeptide: Acyl carrier protein (77 aa).

Residues 1–76 form the Carrier domain; the sequence is MSLEDDVKAI…DVIKYIQERQ (76 aa). The residue at position 36 (serine 36) is an O-(pantetheine 4'-phosphoryl)serine.

It belongs to the acyl carrier protein (ACP) family. In terms of processing, 4'-phosphopantetheine is transferred from CoA to a specific serine of apo-ACP by AcpS. This modification is essential for activity because fatty acids are bound in thioester linkage to the sulfhydryl of the prosthetic group.

The protein resides in the cytoplasm. Its pathway is lipid metabolism; fatty acid biosynthesis. In terms of biological role, carrier of the growing fatty acid chain in fatty acid biosynthesis. The polypeptide is Acyl carrier protein (Chlamydia muridarum (strain MoPn / Nigg)).